Reading from the N-terminus, the 126-residue chain is 13 kDa ribonucleoprotein-associated protein (126 aa).

It belongs to the eukaryotic ribosomal protein eL8 family. As to quaternary structure, binds to the C'/D and B/C motifs in U3 snoRNA. Component of the U4/U6-U5 tri-snRNP complex composed of the U4, U6 and U5 snRNAs and at least PRP3, PRP4, PRP6, PRP8, PRP18, PRP31, PRP38, SNU13, SNU23, SNU66, SNU114, SPP381, SMB1, SMD1, SMD2, SMD3, SMX2, SMX3, LSM2, LSM3, LSM4, LSM5, LSM6, LSM7, LSM8, BRR2 and DIB1. Binds to the 5'-stem-loop of U4 snRNA. Component of the ribosomal small subunit (SSU) processome composed of at least 40 protein subunits and snoRNA U3.

The protein resides in the nucleus. It localises to the nucleolus. Common component of the spliceosome and rRNA processing machinery. In association with the spliceosomal U4/U6.U5 tri-snRNP particle, required for splicing of pre-mRNA. In association with box C/D snoRNPs, required for processing of pre-ribosomal RNA (rRNA) and site-specific 2'-O-methylation of substrate RNAs. Essential for the accumulation and stability of U4 snRNA, U6 snRNA, and box C/D snoRNAs. The sequence is that of 13 kDa ribonucleoprotein-associated protein (SNU13) from Saccharomyces cerevisiae (strain ATCC 204508 / S288c) (Baker's yeast).